Consider the following 240-residue polypeptide: MKTSGGSDAAKRRAGESAAETVTDGEVVGLGTGSTAAHAIRRLGDRVDSGLDIRGVATSFASRELAAECGIPLLDLDEAVGSDATGIDIAIDGADQVAVGEGESEVGPLIKGGGAAHAREKLVDASADRFLVVADPSKETPVLNRSVPVEVLPAGRSAVAEAVRAAGGEPTLRRAERKDGPVVTDNGNLVLDCAFGEIADPDALSTTLSTTPGVVEHGIFVGLADEVHVGTETGVRVARR.

The tract at residues 1-23 (MKTSGGSDAAKRRAGESAAETVT) is disordered. Residues 32-35 (TGST), 92-95 (DGAD), and 111-114 (KGGG) contribute to the substrate site. Glu-120 functions as the Proton acceptor in the catalytic mechanism. Position 138 (Lys-138) interacts with substrate.

Belongs to the ribose 5-phosphate isomerase family. In terms of assembly, homodimer.

It carries out the reaction aldehydo-D-ribose 5-phosphate = D-ribulose 5-phosphate. The protein operates within carbohydrate degradation; pentose phosphate pathway; D-ribose 5-phosphate from D-ribulose 5-phosphate (non-oxidative stage): step 1/1. Functionally, catalyzes the reversible conversion of ribose-5-phosphate to ribulose 5-phosphate. The protein is Ribose-5-phosphate isomerase A of Halorubrum lacusprofundi (strain ATCC 49239 / DSM 5036 / JCM 8891 / ACAM 34).